Here is a 365-residue protein sequence, read N- to C-terminus: Neutral protease 2 homolog mep20 (365 aa).

Positions 1-19 (MKVTILASAILALINGALA) are cleaved as a signal peptide. Positions 20-172 (LPANTPTLDV…PQAIKLLDRR (153 aa)) are excised as a propeptide. N-linked (GlcNAc...) asparagine glycosylation occurs at asparagine 73. 2 disulfides stabilise this stretch: cysteine 178–cysteine 249 and cysteine 256–cysteine 274. Zn(2+) is bound at residue histidine 299. Glutamate 300 is a catalytic residue. The Zn(2+) site is built by histidine 303 and aspartate 314. N-linked (GlcNAc...) asparagine glycosylation occurs at asparagine 351.

The protein belongs to the peptidase M35 family. Zn(2+) serves as cofactor.

The protein localises to the secreted. The catalysed reaction is Preferential cleavage of bonds with hydrophobic residues in P1'. Also 3-Asn-|-Gln-4 and 8-Gly-|-Ser-9 bonds in insulin B chain.. Its function is as follows. Secreted metalloproteinase that allows assimilation of proteinaceous substrates. Shows high activities on basic nuclear substrates such as histone and protamine. May be involved in virulence. This is Neutral protease 2 homolog mep20 (mep20) from Aspergillus fumigatus (Neosartorya fumigata).